We begin with the raw amino-acid sequence, 245 residues long: Glycerophosphodiester phosphodiesterase (245 aa).

In terms of domain architecture, GP-PDE spans 2–241 (TKIFAHRGFK…DFPDRAVKIR (240 aa)). The active-site Proton acceptor is histidine 7. The a divalent metal cation site is built by glutamate 34 and aspartate 36. Histidine 49 acts as the Proton donor in catalysis. Glutamate 110 is a binding site for a divalent metal cation.

Belongs to the glycerophosphoryl diester phosphodiesterase family. It depends on Ni(2+) as a cofactor. Co(2+) serves as cofactor. The cofactor is Mn(2+).

It carries out the reaction a sn-glycero-3-phosphodiester + H2O = an alcohol + sn-glycerol 3-phosphate + H(+). Inhibited by EDTA and various organic solvents such as chloroform, toluene or benzene. In terms of biological role, glycerophosphodiester phosphodiesterase hydrolyzes glycerophosphodiesters into glycerol-3-phosphate (G3P) and the corresponding alcohol. Can hydrolyze the model substrate bis-(p-nitrophenyl phosphate) (bis(pNPP)) to p-nitrophenol. Can also catalyze the degradation of diphenyl phosphate (DPHP) to phenyl phosphate (PHP). DPHP is an aryl phosphate ester used as a chemical additive and an industrial catalyst that can easily spread to the environment and exhibits toxicity toward organisms. This is Glycerophosphodiester phosphodiesterase from Bacillus altitudinis.